The chain runs to 144 residues: Mediator of RNA polymerase II transcription subunit 21 (144 aa).

It belongs to the Mediator complex subunit 21 family. Component of the Mediator complex, which is composed of MED1, MED4, MED6, MED7, MED8, MED9, MED10, MED11, MED12, MED13, MED13L, MED14, MED15, MED16, MED17, MED18, MED19, MED20, MED21, MED22, MED23, MED24, MED25, MED26, MED27, MED29, MED30, MED31, CCNC, CDK8 and CDC2L6/CDK11. The MED12, MED13, CCNC and CDK8 subunits form a distinct module termed the CDK8 module. Mediator containing the CDK8 module is less active than Mediator lacking this module in supporting transcriptional activation. Individual preparations of the Mediator complex lacking one or more distinct subunits have been variously termed ARC, CRSP, DRIP, PC2, SMCC and TRAP. Interacts with PPARG. Interacts with THRA in a ligand-dependent fashion.

The protein localises to the nucleus. In terms of biological role, component of the Mediator complex, a coactivator involved in the regulated transcription of nearly all RNA polymerase II-dependent genes. Mediator functions as a bridge to convey information from gene-specific regulatory proteins to the basal RNA polymerase II transcription machinery. Mediator is recruited to promoters by direct interactions with regulatory proteins and serves as a scaffold for the assembly of a functional preinitiation complex with RNA polymerase II and the general transcription factors. The sequence is that of Mediator of RNA polymerase II transcription subunit 21 (MED21) from Macaca fascicularis (Crab-eating macaque).